We begin with the raw amino-acid sequence, 277 residues long: Large ribosomal subunit protein uL2 (277 aa).

Positions 222–277 are disordered; that stretch reads GVAMNPVDHPHGGGEGRTSGGRHPVSPWGKPTKGKRTRSNKATDKFIMRTRHQRKK.

Belongs to the universal ribosomal protein uL2 family. In terms of assembly, part of the 50S ribosomal subunit. Forms a bridge to the 30S subunit in the 70S ribosome.

Functionally, one of the primary rRNA binding proteins. Required for association of the 30S and 50S subunits to form the 70S ribosome, for tRNA binding and peptide bond formation. It has been suggested to have peptidyltransferase activity; this is somewhat controversial. Makes several contacts with the 16S rRNA in the 70S ribosome. The chain is Large ribosomal subunit protein uL2 from Bartonella tribocorum (strain CIP 105476 / IBS 506).